The chain runs to 123 residues: Large ribosomal subunit protein bL12 (123 aa).

This sequence belongs to the bacterial ribosomal protein bL12 family. In terms of assembly, homodimer. Part of the ribosomal stalk of the 50S ribosomal subunit. Forms a multimeric L10(L12)X complex, where L10 forms an elongated spine to which 2 to 4 L12 dimers bind in a sequential fashion. Binds GTP-bound translation factors.

Forms part of the ribosomal stalk which helps the ribosome interact with GTP-bound translation factors. Is thus essential for accurate translation. This chain is Large ribosomal subunit protein bL12, found in Hydrogenovibrio crunogenus (strain DSM 25203 / XCL-2) (Thiomicrospira crunogena).